The sequence spans 338 residues: Lumican (338 aa).

Positions 1 to 18 are cleaved as a signal peptide; that stretch reads MSLSAFTLFLALIGGTSG. Gln-19 is modified (pyrrolidone carboxylic acid). Sulfotyrosine is present on residues Tyr-20, Tyr-21, Tyr-23, and Tyr-30. The LRRNT domain occupies 28-66; sequence SIYGQSSPNCAPECNCPESYPSAMYCDELKLKSVPMVPP. LRR repeat units follow at residues 67–88, 91–114, 117–137, 138–159, 160–181, 185–205, 206–227, 230–253, 255–276, and 277–296; these read GIKYLYLRNNQIDHIDEKAFEN, DLQWLILDHNLLENSKIKGRVFSK, QLKKLHINHNNLTESVGPLPK, SLEDLQLTHNKITKLGSFEGLV, NLTFIHLQHNRLKEDAVSAAFK, SLEYLDLSFNQIARLPSGLPV, SLLTLYLDNNKISNIPDEYFKR, ALQYLRLSHNELADSGIPGNSFNV, SLVELDLSYNKLKNIPTVNENL, and ENYYLEVNQLEKFDIKSFCK. Asn-88 carries N-linked (GlcNAc...) (keratan sulfate) asparagine glycosylation. Asn-127 carries an N-linked (GlcNAc...) (keratan sulfate) asparagine glycan. An N-linked (GlcNAc...) (keratan sulfate) asparagine glycan is attached at Asn-160. Asn-252 is a glycosylation site (N-linked (GlcNAc...) (keratan sulfate) asparagine). Residues Cys-295 and Cys-328 are joined by a disulfide bond. Ser-304 is subject to Phosphoserine. The stretch at 305-326 is one LRR 11 repeat; sequence KIKHLRLDGNRISETSLPPDMY.

This sequence belongs to the small leucine-rich proteoglycan (SLRP) family. SLRP class II subfamily. Binds to laminin. In terms of processing, sulfated on tyrosine residue(s). Post-translationally, contains keratan sulfate. Cornea and other tissues.

It is found in the secreted. The protein resides in the extracellular space. It localises to the extracellular matrix. The polypeptide is Lumican (LUM) (Homo sapiens (Human)).